The sequence spans 454 residues: Probable DNA primase large subunit (454 aa).

[4Fe-4S] cluster-binding residues include Cys-280, Cys-359, Cys-375, and Cys-415.

This sequence belongs to the eukaryotic-type primase large subunit family. Heterodimer of a small subunit and a large subunit. The cofactor is [4Fe-4S] cluster.

Functionally, DNA primase is the polymerase that synthesizes small RNA primers for the Okazaki fragments made during discontinuous DNA replication. The chain is Probable DNA primase large subunit from Arabidopsis thaliana (Mouse-ear cress).